Consider the following 567-residue polypeptide: Proline--tRNA ligase (567 aa).

It belongs to the class-II aminoacyl-tRNA synthetase family. ProS type 1 subfamily. Homodimer.

The protein localises to the cytoplasm. It catalyses the reaction tRNA(Pro) + L-proline + ATP = L-prolyl-tRNA(Pro) + AMP + diphosphate. Its function is as follows. Catalyzes the attachment of proline to tRNA(Pro) in a two-step reaction: proline is first activated by ATP to form Pro-AMP and then transferred to the acceptor end of tRNA(Pro). As ProRS can inadvertently accommodate and process non-cognate amino acids such as alanine and cysteine, to avoid such errors it has two additional distinct editing activities against alanine. One activity is designated as 'pretransfer' editing and involves the tRNA(Pro)-independent hydrolysis of activated Ala-AMP. The other activity is designated 'posttransfer' editing and involves deacylation of mischarged Ala-tRNA(Pro). The misacylated Cys-tRNA(Pro) is not edited by ProRS. This Staphylococcus aureus (strain COL) protein is Proline--tRNA ligase.